We begin with the raw amino-acid sequence, 351 residues long: Synaptonemal complex central element protein 1 (351 aa).

Over residues 1–10 (MAGRSLTSKA) the composition is skewed to polar residues. Disordered stretches follow at residues 1–31 (MAGR…TSSQ) and 267–351 (KCQQ…KELF). Residues 52 to 290 (RVEVLINRIN…ELEKHGMQVP (239 aa)) are a coiled coil.

Belongs to the SYCE family. In terms of assembly, homodimer. Found in a complex with SYCP1 and SYCE2. Interacts with SYCP1, SYCE2 and SYCE3. Interacts with SIX6OS1.

It localises to the nucleus. It is found in the chromosome. Functionally, major component of the transverse central element of synaptonemal complexes (SCS), formed between homologous chromosomes during meiotic prophase. Requires SYCP1 in order to be incorporated into the central element. May have a role in the synaptonemal complex assembly, stabilization and recombination. This Homo sapiens (Human) protein is Synaptonemal complex central element protein 1 (SYCE1).